The primary structure comprises 269 residues: Glutamate racemase (269 aa).

Substrate-binding positions include D14–S15 and Y46–S47. C78 (proton donor/acceptor) is an active-site residue. N79–T80 is a substrate binding site. Catalysis depends on C189, which acts as the Proton donor/acceptor. T190–H191 is a substrate binding site.

Belongs to the aspartate/glutamate racemases family.

It catalyses the reaction L-glutamate = D-glutamate. Its pathway is cell wall biogenesis; peptidoglycan biosynthesis. Its function is as follows. Provides the (R)-glutamate required for cell wall biosynthesis. This Haemophilus influenzae (strain PittGG) protein is Glutamate racemase.